The following is a 404-amino-acid chain: 5-aminolevulinate synthase (404 aa).

Positions 21 and 136 each coordinate substrate. Pyridoxal 5'-phosphate is bound by residues S188, H216, and T244. Residue K247 is part of the active site. The residue at position 247 (K247) is an N6-(pyridoxal phosphate)lysine. Pyridoxal 5'-phosphate is bound by residues T276 and T277. A substrate-binding site is contributed by T362.

It belongs to the class-II pyridoxal-phosphate-dependent aminotransferase family. Homodimer. It depends on pyridoxal 5'-phosphate as a cofactor.

The enzyme catalyses succinyl-CoA + glycine + H(+) = 5-aminolevulinate + CO2 + CoA. Its pathway is porphyrin-containing compound metabolism; protoporphyrin-IX biosynthesis; 5-aminolevulinate from glycine: step 1/1. This is 5-aminolevulinate synthase (hemA) from Rhizobium meliloti (strain 1021) (Ensifer meliloti).